A 21-amino-acid chain; its full sequence is Hemocyanin subunit 6 (21 aa).

The protein belongs to the tyrosinase family. Hemocyanin subfamily. In terms of tissue distribution, hemolymph.

It is found in the secreted. The protein resides in the extracellular space. Its function is as follows. Hemocyanins are copper-containing oxygen carriers occurring freely dissolved in the hemolymph of many mollusks and arthropods. The sequence is that of Hemocyanin subunit 6 from Maja squinado (Mediterranean spider crab).